The chain runs to 130 residues: Tripartite terminase subunit 2 (130 aa).

Belongs to the herpesviridae TRM2 protein family. In terms of assembly, associates with TRM1 and TRM3 to form the tripartite terminase complex.

It is found in the host nucleus. Its function is as follows. Component of the molecular motor that translocates viral genomic DNA in empty capsid during DNA packaging. Forms a tripartite terminase complex together with TRM1 and TRM3 in the host cytoplasm. Once the complex reaches the host nucleus, it interacts with the capsid portal vertex. This portal forms a ring in which genomic DNA is translocated into the capsid. In Homo sapiens (Human), this protein is Tripartite terminase subunit 2.